The sequence spans 50 residues: uncharacterized protein (50 aa).

A helical membrane pass occupies residues 10-29 (LFFYYPFFIIFLYIYLVFFI).

The protein resides in the plastid. Its subcellular location is the chloroplast membrane. This is an uncharacterized protein from Marchantia polymorpha (Common liverwort).